The sequence spans 187 residues: Peptidyl-tRNA hydrolase (187 aa).

Tyrosine 18 contacts tRNA. Catalysis depends on histidine 23, which acts as the Proton acceptor. Positions 65, 67, and 113 each coordinate tRNA.

This sequence belongs to the PTH family. Monomer.

It localises to the cytoplasm. The catalysed reaction is an N-acyl-L-alpha-aminoacyl-tRNA + H2O = an N-acyl-L-amino acid + a tRNA + H(+). Its function is as follows. Hydrolyzes ribosome-free peptidyl-tRNAs (with 1 or more amino acids incorporated), which drop off the ribosome during protein synthesis, or as a result of ribosome stalling. Catalyzes the release of premature peptidyl moieties from peptidyl-tRNA molecules trapped in stalled 50S ribosomal subunits, and thus maintains levels of free tRNAs and 50S ribosomes. The sequence is that of Peptidyl-tRNA hydrolase from Coxiella burnetii (strain CbuG_Q212) (Coxiella burnetii (strain Q212)).